The sequence spans 392 residues: L-rhamnonate dehydratase (392 aa).

Substrate-binding residues include His22 and Arg48. Residues Asp214, Glu240, and Glu268 each coordinate Mg(2+). Catalysis depends on His318, which acts as the Proton acceptor. Glu338 provides a ligand contact to substrate.

The protein belongs to the mandelate racemase/muconate lactonizing enzyme family. RhamD subfamily. As to quaternary structure, homooctamer; tetramer of dimers. Mg(2+) is required as a cofactor.

It carries out the reaction L-rhamnonate = 2-dehydro-3-deoxy-L-rhamnonate + H2O. Catalyzes the dehydration of L-rhamnonate to 2-keto-3-deoxy-L-rhamnonate (KDR). The protein is L-rhamnonate dehydratase of Paraburkholderia xenovorans (strain LB400).